The following is a 728-amino-acid chain: Catalase-peroxidase (728 aa).

Positions 91 to 218 (WHSAGTYRTA…LAAVQMGLIY (128 aa)) form a cross-link, tryptophyl-tyrosyl-methioninium (Trp-Tyr) (with M-244). The active-site Proton acceptor is the His-92. A cross-link (tryptophyl-tyrosyl-methioninium (Tyr-Met) (with W-91)) is located at residues 218-244 (YVNPEGPDGTPDPVAAAHDIRETFARM). His-259 serves as a coordination point for heme b.

It belongs to the peroxidase family. Peroxidase/catalase subfamily. Homodimer or homotetramer. Heme b serves as cofactor. In terms of processing, formation of the three residue Trp-Tyr-Met cross-link is important for the catalase, but not the peroxidase activity of the enzyme.

The enzyme catalyses H2O2 + AH2 = A + 2 H2O. The catalysed reaction is 2 H2O2 = O2 + 2 H2O. Bifunctional enzyme with both catalase and broad-spectrum peroxidase activity. The chain is Catalase-peroxidase from Burkholderia lata (strain ATCC 17760 / DSM 23089 / LMG 22485 / NCIMB 9086 / R18194 / 383).